Here is a 151-residue protein sequence, read N- to C-terminus: Probable cGMP 3',5'-cyclic phosphodiesterase subunit delta (151 aa).

This sequence belongs to the PDE6D/unc-119 family. In terms of assembly, interacts with Pde6.

It localises to the nucleus. The protein localises to the cytoplasm. The protein is Probable cGMP 3',5'-cyclic phosphodiesterase subunit delta of Drosophila willistoni (Fruit fly).